The sequence spans 306 residues: Ornithine carbamoyltransferase (306 aa).

Carbamoyl phosphate contacts are provided by residues Ser53–Thr56, Gln80, Arg104, and His131–Gln134. Residues Asn162, Asp219, and Ser223–Met224 contribute to the L-ornithine site. Carbamoyl phosphate-binding positions include Cys259 to Leu260 and Arg287.

It belongs to the aspartate/ornithine carbamoyltransferase superfamily. OTCase family.

It localises to the cytoplasm. It catalyses the reaction carbamoyl phosphate + L-ornithine = L-citrulline + phosphate + H(+). The protein operates within amino-acid biosynthesis; L-arginine biosynthesis; L-arginine from L-ornithine and carbamoyl phosphate: step 1/3. Its function is as follows. Reversibly catalyzes the transfer of the carbamoyl group from carbamoyl phosphate (CP) to the N(epsilon) atom of ornithine (ORN) to produce L-citrulline. In Psychrobacter sp. (strain PRwf-1), this protein is Ornithine carbamoyltransferase.